The sequence spans 547 residues: Chaperonin GroEL 1 (547 aa).

Residues 30–33, Lys51, 87–91, Gly415, 479–481, and Asp495 contribute to the ATP site; these read TLGP, DGTTT, and NAA.

This sequence belongs to the chaperonin (HSP60) family. Forms a cylinder of 14 subunits composed of two heptameric rings stacked back-to-back. Interacts with the co-chaperonin GroES.

Its subcellular location is the cytoplasm. It carries out the reaction ATP + H2O + a folded polypeptide = ADP + phosphate + an unfolded polypeptide.. Its function is as follows. Together with its co-chaperonin GroES, plays an essential role in assisting protein folding. The GroEL-GroES system forms a nano-cage that allows encapsulation of the non-native substrate proteins and provides a physical environment optimized to promote and accelerate protein folding. This chain is Chaperonin GroEL 1, found in Vibrio parahaemolyticus serotype O3:K6 (strain RIMD 2210633).